Here is a 201-residue protein sequence, read N- to C-terminus: Probable phosphopantothenoylcysteine decarboxylase (201 aa).

FMN is bound by residues 20-22 (GSV), 45-47 (SKS), 98-101 (SANT), and alanine 132. Substrate contacts are provided by residues asparagine 134 and 164–166 (KLA). Residue cysteine 167 is the Proton donor of the active site. Methionine 175 is a substrate binding site.

The protein belongs to the HFCD (homooligomeric flavin containing Cys decarboxylase) superfamily. In terms of assembly, homotrimer. The cofactor is FMN. In terms of tissue distribution, expressed in roots, shoots, leaves, flowers, developing siliques and seeds.

It carries out the reaction N-[(R)-4-phosphopantothenoyl]-L-cysteine + H(+) = (R)-4'-phosphopantetheine + CO2. It participates in cofactor biosynthesis; coenzyme A biosynthesis; CoA from (R)-pantothenate: step 3/5. In terms of biological role, involved in plant growth and salt and osmotic tolerance. Catalyzes the decarboxylation of 4'-phosphopantothenoylcysteine to 4'-phosphopantetheine, a key step in coenzyme A biosynthesis. The enzyme is also able to decarboxylate pantothenoylcysteine to pantothenoylcysteamine. This is Probable phosphopantothenoylcysteine decarboxylase (HAL3B) from Arabidopsis thaliana (Mouse-ear cress).